A 353-amino-acid chain; its full sequence is Casein kinase II subunit alpha (353 aa).

The Protein kinase domain maps to 39–324; it reads YQLVRKLGRG…AREAMDHPYF (286 aa). ATP is bound by residues 45 to 53 and Lys68; that span reads LGRGKYSEV. Asp156 acts as the Proton acceptor in catalysis. Residues 334–353 are disordered; sequence MVSSNSPTPNALQGPISTTE.

The protein belongs to the protein kinase superfamily. Ser/Thr protein kinase family. CK2 subfamily. Tetramer of two alpha and two beta chains.

The enzyme catalyses L-seryl-[protein] + ATP = O-phospho-L-seryl-[protein] + ADP + H(+). The catalysed reaction is L-threonyl-[protein] + ATP = O-phospho-L-threonyl-[protein] + ADP + H(+). In terms of biological role, casein kinases are operationally defined by their preferential utilization of acidic proteins such as caseins as substrates. The alpha chain contains the catalytic site. May participate in Wnt signaling. This chain is Casein kinase II subunit alpha, found in Spodoptera frugiperda (Fall armyworm).